The sequence spans 510 residues: Putative serine protease K12H4.7 (510 aa).

A signal peptide spans 1–19 (MKTLLAVLLAACVLTQVLS). The active-site Charge relay system is Ser187. N-linked (GlcNAc...) asparagine glycosylation occurs at Asn234. Asp452 acts as the Charge relay system in catalysis. N-linked (GlcNAc...) asparagine glycosylation is present at Asn473. His477 serves as the catalytic Charge relay system.

This sequence belongs to the peptidase S28 family.

The chain is Putative serine protease K12H4.7 from Caenorhabditis elegans.